A 759-amino-acid polypeptide reads, in one-letter code: Protein YdeP (759 aa).

Residues cysteine 49 and cysteine 52 each coordinate [4Fe-4S] cluster.

This sequence belongs to the prokaryotic molybdopterin-containing oxidoreductase family. [4Fe-4S] cluster is required as a cofactor. The cofactor is Mo-bis(molybdopterin guanine dinucleotide).

Its function is as follows. Probably involved in acid resistance. The sequence is that of Protein YdeP (ydeP) from Escherichia coli O6:H1 (strain CFT073 / ATCC 700928 / UPEC).